Reading from the N-terminus, the 166-residue chain is Small ribosomal subunit protein uS5 (166 aa).

Positions L11–V74 constitute an S5 DRBM domain.

This sequence belongs to the universal ribosomal protein uS5 family. Part of the 30S ribosomal subunit. Contacts proteins S4 and S8.

Its function is as follows. With S4 and S12 plays an important role in translational accuracy. Functionally, located at the back of the 30S subunit body where it stabilizes the conformation of the head with respect to the body. The chain is Small ribosomal subunit protein uS5 from Francisella tularensis subsp. holarctica (strain LVS).